A 409-amino-acid chain; its full sequence is FAD-dependent monooxygenase phnB (409 aa).

E35, A50, R110, and D311 together coordinate FAD.

The protein belongs to the paxM FAD-dependent monooxygenase family. FAD serves as cofactor.

It carries out the reaction 3,6,7,9-tetrahydroxy-3-methyl-2,3-dihydro-1H-naphtho[2,1-b]pyran-1-one + NADPH + O2 + H(+) = 2,3,4,7,9-pentahydroxy-6-methyl-1H-phenalen-1-one + NADP(+) + 2 H2O. It functions in the pathway secondary metabolite biosynthesis. Functionally, FAD-dependent monooxygenase; part of the gene cluster that mediates the biosynthesis of phenalenones such as herqueinone, compounds that have been reported to treat tumors, bacterial infections and/or mycoses, and rheumatic diseases. The non-reducing polyketide synthase phnA synthesizes the heptaketide backbone and cyclizes it into the angular, hemiketal-containing naphtho-gamma-pyrone prephenalenone. The product template (PT) domain of phnA catalyzes only the C4-C9 aldol condensation, which is unprecedented among known PT domains. The transformation of prephenalenone to phenalenones requires an FAD-dependent monooxygenase phnB, which catalyzes the C2 aromatic hydroxylation of prephenalenone and ring opening of the gamma-pyrone ring simultaneously. Subsequent intramolecular deprotonation of C3 phenolic oxygen accelerates phenalenone ring closure to yield the tricyclic phenalenone core with a C2 hydroxylation. The prenyltransferase phnF further catalyzes reverse C-prenylation of phenalenone by direct electrophilic substitution at C6, or possibly via first a forward O-prenylation of a neighboring phenol in phenalenone, followed by a Claisen rearrangement. The hydroalkoxylation enzyme phnH catalyzes the 5-exo-trig cyclization via acid catalysis after the spontaneous deprotonation of 7-OH, which leads to the formation of the dihydrobenzofuran atrovenetin. Atrovenetin is further converted to deoxyherqueinone by the O-methyltransferase phnC which can methylate C2-OH to stabilize the northern portion of the phenalenone core. Finally, the oxidoreductase phnG converts deoxyherqueinone to herqueinone via C6 hydroxylation. The polypeptide is FAD-dependent monooxygenase phnB (Penicillium herquei).